We begin with the raw amino-acid sequence, 211 residues long: Proteasome subunit beta (211 aa).

A propeptide spans Met1 to Gly9 (removed in mature form; by autocatalysis). The active-site Nucleophile is the Thr10.

This sequence belongs to the peptidase T1B family. As to quaternary structure, the 20S proteasome core is composed of 14 alpha and 14 beta subunits that assemble into four stacked heptameric rings, resulting in a barrel-shaped structure. The two inner rings, each composed of seven catalytic beta subunits, are sandwiched by two outer rings, each composed of seven alpha subunits. The catalytic chamber with the active sites is on the inside of the barrel. Has a gated structure, the ends of the cylinder being occluded by the N-termini of the alpha-subunits. Is capped at one or both ends by the proteasome regulatory ATPase, PAN.

It localises to the cytoplasm. It carries out the reaction Cleavage of peptide bonds with very broad specificity.. With respect to regulation, the formation of the proteasomal ATPase PAN-20S proteasome complex, via the docking of the C-termini of PAN into the intersubunit pockets in the alpha-rings, triggers opening of the gate for substrate entry. Interconversion between the open-gate and close-gate conformations leads to a dynamic regulation of the 20S proteasome proteolysis activity. In terms of biological role, component of the proteasome core, a large protease complex with broad specificity involved in protein degradation. This chain is Proteasome subunit beta, found in Methanosphaerula palustris (strain ATCC BAA-1556 / DSM 19958 / E1-9c).